The chain runs to 110 residues: UPF0060 membrane protein Ping_0587 (110 aa).

4 helical membrane-spanning segments follow: residues 6-26, 33-53, 61-81, and 87-107; these read IFGIFTVTAVAEIVGCYLPYL, SIWLLVPAAFSLAAFVWLLTL, TYAAYGGIYVSVALMWLWLVE, and MTDLLGVLICIIGMAVIMFGP.

The protein belongs to the UPF0060 family.

Its subcellular location is the cell inner membrane. This is UPF0060 membrane protein Ping_0587 from Psychromonas ingrahamii (strain DSM 17664 / CCUG 51855 / 37).